A 359-amino-acid chain; its full sequence is Peptide chain release factor 1 (359 aa).

N5-methylglutamine is present on Gln235. Residues 287–312 form a disordered region; that stretch reads AQEASAMRSAQVGSGDRSERIRTYNF.

The protein belongs to the prokaryotic/mitochondrial release factor family. In terms of processing, methylated by PrmC. Methylation increases the termination efficiency of RF1.

The protein resides in the cytoplasm. Functionally, peptide chain release factor 1 directs the termination of translation in response to the peptide chain termination codons UAG and UAA. This is Peptide chain release factor 1 from Chlamydia trachomatis serovar L2 (strain ATCC VR-902B / DSM 19102 / 434/Bu).